We begin with the raw amino-acid sequence, 88 residues long: MANSKSAKKRALQSEKRRQHNASRRSMLRTYVKKVIAAIKAGDHKTATEAFAAAQPIVDRMATKGLIHKNKAARHKARLNAKIKALAA.

The tract at residues 1–27 (MANSKSAKKRALQSEKRRQHNASRRSM) is disordered.

The protein belongs to the bacterial ribosomal protein bS20 family.

Binds directly to 16S ribosomal RNA. In Shewanella sp. (strain ANA-3), this protein is Small ribosomal subunit protein bS20.